The sequence spans 266 residues: Probable septum site-determining protein MinC (266 aa).

The segment at 98–146 (ILKGGRPVSDVDVPKVEPESPPAEEKKKTGKATKASGKSDEIGETDSPQ) is disordered. Over residues 109-124 (DVPKVEPESPPAEEKK) the composition is skewed to basic and acidic residues.

This sequence belongs to the MinC family. Interacts with MinD and FtsZ.

Functionally, cell division inhibitor that blocks the formation of polar Z ring septums. Rapidly oscillates between the poles of the cell to destabilize FtsZ filaments that have formed before they mature into polar Z rings. Prevents FtsZ polymerization. This is Probable septum site-determining protein MinC from Allorhizobium ampelinum (strain ATCC BAA-846 / DSM 112012 / S4) (Agrobacterium vitis (strain S4)).